The following is a 187-amino-acid chain: dCTP deaminase, dUMP-forming (187 aa).

Residues 99-104 (KSSIAR), Asp-117, 125-127 (TLE), Gln-146, Tyr-159, Lys-166, and Gln-170 each bind dCTP. Glu-127 acts as the Proton donor/acceptor in catalysis.

This sequence belongs to the dCTP deaminase family. Homotrimer.

It carries out the reaction dCTP + 2 H2O = dUMP + NH4(+) + diphosphate. Its pathway is pyrimidine metabolism; dUMP biosynthesis; dUMP from dCTP: step 1/1. Functionally, bifunctional enzyme that catalyzes both the deamination of dCTP to dUTP and the hydrolysis of dUTP to dUMP without releasing the toxic dUTP intermediate. The chain is dCTP deaminase, dUMP-forming from Methanoculleus marisnigri (strain ATCC 35101 / DSM 1498 / JR1).